The chain runs to 332 residues: Ectoine dioxygenase (332 aa).

A compositionally biased stretch (polar residues) spans 1 to 10 (MSVQTSSNRP). A disordered region spans residues 1-47 (MSVQTSSNRPLPQANLHIATETPEADSRIRSAPRPGQDPYPTRLSEP). Gln-163 is an L-ectoine binding site. Lys-169 contacts 2-oxoglutarate. Fe cation contacts are provided by His-180, Asp-182, and His-281.

This sequence belongs to the PhyH family. EctD subfamily. In terms of assembly, homodimer. Requires Fe(2+) as cofactor.

It catalyses the reaction L-ectoine + 2-oxoglutarate + O2 = 5-hydroxyectoine + succinate + CO2. Involved in the biosynthesis of 5-hydroxyectoine, called compatible solute, which helps organisms to survive extreme osmotic stress by acting as a highly soluble organic osmolyte. Catalyzes the 2-oxoglutarate-dependent selective hydroxylation of L-ectoine to yield (4S,5S)-5-hydroxyectoine. The protein is Ectoine dioxygenase of Halomonas elongata (strain ATCC 33173 / DSM 2581 / NBRC 15536 / NCIMB 2198 / 1H9).